We begin with the raw amino-acid sequence, 636 residues long: Plasma kallikrein (636 aa).

A signal peptide spans 1–19 (MIALRQAAYFICLFATVSC). 4 Apple domains span residues 21 to 104 (CLTQ…LKRC), 111 to 194 (CHRS…LKAC), 201 to 284 (CRVD…LLTC), and 294 to 377 (CHSK…LRLC). Cystine bridges form between cysteine 21–cysteine 104, cysteine 47–cysteine 77, cysteine 51–cysteine 57, cysteine 111–cysteine 194, cysteine 137–cysteine 166, cysteine 141–cysteine 147, cysteine 201–cysteine 284, cysteine 227–cysteine 256, cysteine 231–cysteine 237, cysteine 294–cysteine 377, cysteine 320–cysteine 349, and cysteine 324–cysteine 330. Asparagine 66 and asparagine 127 each carry an N-linked (GlcNAc...) asparagine glycan. N-linked (GlcNAc...) asparagine glycosylation is found at asparagine 361 and asparagine 397. The 236-residue stretch at 392 to 627 (IVGGTNASWG…YVDWILEKTQ (236 aa)) folds into the Peptidase S1 domain. Cysteine 420 and cysteine 436 are disulfide-bonded. Residue histidine 435 is the Charge relay system of the active site. Asparagine 454 carries an N-linked (GlcNAc...) asparagine glycan. The Charge relay system role is filled by aspartate 484. Asparagine 495 carries an N-linked (GlcNAc...) asparagine glycan. Disulfide bonds link cysteine 518-cysteine 585, cysteine 549-cysteine 564, and cysteine 575-cysteine 603. Serine 579 serves as the catalytic Charge relay system.

It belongs to the peptidase S1 family. Plasma kallikrein subfamily. In terms of assembly, forms a heterodimer with SERPINA5. The zymogen is activated by factor XIIa, which cleaves the molecule into a light chain, which contains the active site, and a heavy chain, which associates with HMW kininogen. These chains are linked by one or more disulfide bonds.

It is found in the secreted. It carries out the reaction Cleaves selectively Arg-|-Xaa and Lys-|-Xaa bonds, including Lys-|-Arg and Arg-|-Ser bonds in (human) kininogen to release bradykinin.. Its activity is regulated as follows. Inhibited by SERPINA5. The enzyme cleaves Lys-Arg and Arg-Ser bonds. It activates, in a reciprocal reaction, factor XII after its binding to a negatively charged surface. It also releases bradykinin from HMW kininogen and may also play a role in the renin-angiotensin system by converting prorenin into renin. This Bos taurus (Bovine) protein is Plasma kallikrein (KLKB1).